Consider the following 287-residue polypeptide: Nucleotide-binding protein VV0445 (287 aa).

Residue 8–15 participates in ATP binding; the sequence is GHSGAGKS. GTP is bound at residue 56-59; it reads DVRN.

This sequence belongs to the RapZ-like family.

Functionally, displays ATPase and GTPase activities. This chain is Nucleotide-binding protein VV0445, found in Vibrio vulnificus (strain YJ016).